Reading from the N-terminus, the 491-residue chain is Trigger factor (491 aa).

The 86-residue stretch at 169–254 (GDRVTIDYLG…VKDVAAAAPI (86 aa)) folds into the PPIase FKBP-type domain. The disordered stretch occupies residues 433 to 491 (KTVSKDELMAEDEAEDKPAKKAPAKKKAAAKAEAGEGEEAAAPKKKAPAKKKAADDSAE). Residues 452 to 461 (KKAPAKKKAA) show a composition bias toward basic residues.

It belongs to the FKBP-type PPIase family. Tig subfamily.

It is found in the cytoplasm. It carries out the reaction [protein]-peptidylproline (omega=180) = [protein]-peptidylproline (omega=0). Functionally, involved in protein export. Acts as a chaperone by maintaining the newly synthesized protein in an open conformation. Functions as a peptidyl-prolyl cis-trans isomerase. The polypeptide is Trigger factor (Sinorhizobium fredii (strain NBRC 101917 / NGR234)).